A 259-amino-acid chain; its full sequence is Aspartate/glutamate leucyltransferase (259 aa).

This sequence belongs to the R-transferase family. Bpt subfamily.

The protein localises to the cytoplasm. It catalyses the reaction N-terminal L-glutamyl-[protein] + L-leucyl-tRNA(Leu) = N-terminal L-leucyl-L-glutamyl-[protein] + tRNA(Leu) + H(+). The catalysed reaction is N-terminal L-aspartyl-[protein] + L-leucyl-tRNA(Leu) = N-terminal L-leucyl-L-aspartyl-[protein] + tRNA(Leu) + H(+). In terms of biological role, functions in the N-end rule pathway of protein degradation where it conjugates Leu from its aminoacyl-tRNA to the N-termini of proteins containing an N-terminal aspartate or glutamate. This Rhizobium meliloti (strain 1021) (Ensifer meliloti) protein is Aspartate/glutamate leucyltransferase.